The following is a 424-amino-acid chain: 3-isopropylmalate dehydratase large subunit 2 (424 aa).

Residues Cys299, Cys359, and Cys362 each contribute to the [4Fe-4S] cluster site.

Belongs to the aconitase/IPM isomerase family. LeuC type 2 subfamily. Heterodimer of LeuC and LeuD. The cofactor is [4Fe-4S] cluster.

It catalyses the reaction (2R,3S)-3-isopropylmalate = (2S)-2-isopropylmalate. Its pathway is amino-acid biosynthesis; L-leucine biosynthesis; L-leucine from 3-methyl-2-oxobutanoate: step 2/4. Functionally, catalyzes the isomerization between 2-isopropylmalate and 3-isopropylmalate, via the formation of 2-isopropylmaleate. In Rubrobacter xylanophilus (strain DSM 9941 / JCM 11954 / NBRC 16129 / PRD-1), this protein is 3-isopropylmalate dehydratase large subunit 2.